Consider the following 117-residue polypeptide: UPF0102 protein RSKD131_0118 (117 aa).

Belongs to the UPF0102 family.

This chain is UPF0102 protein RSKD131_0118, found in Cereibacter sphaeroides (strain KD131 / KCTC 12085) (Rhodobacter sphaeroides).